A 130-amino-acid chain; its full sequence is Small ribosomal subunit protein uS8 (130 aa).

It belongs to the universal ribosomal protein uS8 family. Part of the 30S ribosomal subunit. Contacts proteins S5 and S12.

One of the primary rRNA binding proteins, it binds directly to 16S rRNA central domain where it helps coordinate assembly of the platform of the 30S subunit. In Vibrio campbellii (strain ATCC BAA-1116), this protein is Small ribosomal subunit protein uS8.